The following is a 93-amino-acid chain: UPF0521 protein A (93 aa).

Residues 2–58 (SLKEVITSLKNDFHSINKEIDSMKENNEKQEDKIFQEIKKLKLEMELLRKDNLSFKT) are a coiled coil.

Belongs to the UPF0521 family.

In Dictyostelium discoideum (Social amoeba), this protein is UPF0521 protein A.